A 289-amino-acid chain; its full sequence is Protein SET (289 aa).

Positions 1 to 42 are disordered; it reads MAPKRQSAILPQPKKPRPVAAPKLEDKSASPGLPKGEKEQQE. Alanine 2 is modified (n,N,N-trimethylalanine). Serine 7 carries the phosphoserine modification. Proline 11 is modified (N6-acetyllysine). Phosphoserine is present on lysine 15. Residue lysine 23 is modified to N6-acetyllysine. A phosphoserine mark is found at leucine 24, serine 28, and serine 62. A dimerization region spans residues 31–77; sequence PGLPKGEKEQQEAIEHIDEVQNEIDRLNEQASEEILKVEQKYNKLRQ. Lysine 67 bears the N6-acetyllysine mark. Residues 78 to 224 form an earmuff domain region; it reads PFFQKRSELI…ELGEVIKDDI (147 aa). Phosphotyrosine is present on tyrosine 145. Lysine 149 is subject to N6-acetyllysine. Lysine 153 is covalently cross-linked (Glycyl lysine isopeptide (Lys-Gly) (interchain with G-Cter in ubiquitin)). Disordered regions lie at residues 157-206 and 235-289; these read LNES…TWFT and PDMD…GEDD. Basic and acidic residues predominate over residues 168-180; the sequence is TEIKWKSGKDLTK. An N6-acetyllysine modification is found at lysine 171. A compositionally biased stretch (acidic residues) spans 236-289; sequence DMDDEEGEAEDDDDDDEEEEGLEDIDEEGDEDEGEEDDDEDEGEEGEEDEGEDD.

The protein belongs to the nucleosome assembly protein (NAP) family. As to quaternary structure, headphone-shaped homodimer. Isoform 1 and isoform 2 interact directly with each other and with ANP32A within the tripartite INHAT (inhibitor of acetyltransferases) complex. Isoform 1 and isoform 2 interact also with histones. Isoform 2 is a omponent of the SET complex, composed of at least ANP32A, APEX1, HMGB2, NME1, SET and TREX1, but not NME2 or TREX2. Within this complex, directly interacts with ANP32A, NME1, HMGB2 and TREX1; the interaction with ANP32A is enhanced after cleavage. Interacts with APBB1, CHTOP, SETBP1, SGO1. Post-translationally, isoform 2 is phosphorylated on Ser-15 and Ser-24. In terms of processing, isoform 2 is acetylated on Lys-11. Some glutamate residues are glycylated by TTLL8. This modification occurs exclusively on glutamate residues and results in a glycine chain on the gamma-carboxyl group. Post-translationally, N-terminus of isoform 1 is methylated by METTL11A/NTM1. Mainly trimethylated. In terms of processing, cleaved after Lys-176 by GZMA. The cleavage inhibits its nucleosome assembly activity and disrupts the inhibition on NME1. Widely expressed, with higher expression in brain, thymus, spleen and bone marrow, and lower expression in heart, liver and muscle.

It localises to the cytoplasm. The protein localises to the cytosol. Its subcellular location is the endoplasmic reticulum. The protein resides in the nucleus. It is found in the nucleoplasm. Functionally, multitasking protein, involved in apoptosis, transcription, nucleosome assembly and histone chaperoning. Isoform 2 anti-apoptotic activity is mediated by inhibition of the GZMA-activated DNase, NME1. In the course of cytotoxic T-lymphocyte (CTL)-induced apoptosis, GZMA cleaves SET, disrupting its binding to NME1 and releasing NME1 inhibition. Isoform 1 and isoform 2 are potent inhibitors of protein phosphatase 2A. Isoform 1 and isoform 2 inhibit EP300/CREBBP and PCAF-mediated acetylation of histones (HAT) and nucleosomes, most probably by masking the accessibility of lysines of histones to the acetylases. The predominant target for inhibition is histone H4. HAT inhibition leads to silencing of HAT-dependent transcription and prevents active demethylation of DNA. Both isoforms stimulate DNA replication of the adenovirus genome complexed with viral core proteins; however, isoform 2 specific activity is higher. The sequence is that of Protein SET (Set) from Rattus norvegicus (Rat).